The following is a 26-amino-acid chain: Hemocyanin subunit 3 (26 aa).

Belongs to the tyrosinase family. Hemocyanin subfamily. As to expression, hemolymph.

It localises to the secreted. It is found in the extracellular space. In terms of biological role, hemocyanins are copper-containing oxygen carriers occurring freely dissolved in the hemolymph of many mollusks and arthropods. The chain is Hemocyanin subunit 3 from Homarus americanus (American lobster).